A 104-amino-acid chain; its full sequence is Large ribosomal subunit protein uL24 (104 aa).

Belongs to the universal ribosomal protein uL24 family. In terms of assembly, part of the 50S ribosomal subunit.

One of two assembly initiator proteins, it binds directly to the 5'-end of the 23S rRNA, where it nucleates assembly of the 50S subunit. In terms of biological role, one of the proteins that surrounds the polypeptide exit tunnel on the outside of the subunit. This is Large ribosomal subunit protein uL24 from Pseudomonas fluorescens (strain Pf0-1).